The sequence spans 153 residues: Riboflavin synthase (153 aa).

Belongs to the DMRL synthase family. In terms of assembly, homooligomer. The cofactor is Mg(2+).

It catalyses the reaction 2 6,7-dimethyl-8-(1-D-ribityl)lumazine + H(+) = 5-amino-6-(D-ribitylamino)uracil + riboflavin. It participates in cofactor biosynthesis; riboflavin biosynthesis; riboflavin from 2-hydroxy-3-oxobutyl phosphate and 5-amino-6-(D-ribitylamino)uracil: step 2/2. With respect to regulation, inhibited by EDTA. In terms of biological role, the relatively low activity of this enzyme suggested that 6,7-dimethyl-8-ribityllumazine might not be its natural substrate. The protein is Riboflavin synthase (ribC) of Methanothermobacter marburgensis (strain ATCC BAA-927 / DSM 2133 / JCM 14651 / NBRC 100331 / OCM 82 / Marburg) (Methanobacterium thermoautotrophicum).